The sequence spans 458 residues: Flap endonuclease 1 (458 aa).

The N-domain stretch occupies residues 1–105; that stretch reads MGIKGLTGLL…GVLSKRFEKR (105 aa). Aspartate 34 is a binding site for Mg(2+). Arginine 47 and arginine 71 together coordinate DNA. Mg(2+) contacts are provided by aspartate 87, glutamate 159, glutamate 161, aspartate 180, and aspartate 182. Positions 123-254 are I-domain; the sequence is DVDRFSRRTV…KSALKLIREF (132 aa). Glutamate 159 lines the DNA pocket. Residues glycine 232 and aspartate 234 each contribute to the DNA site. Aspartate 234 lines the Mg(2+) pocket. Disordered regions lie at residues 268-347 and 416-458; these read AAAR…IPDE and GFFT…AKKK. Composition is skewed to acidic residues over residues 275–285 and 293–309; these read AEEEDEEEAEE and EMPDDEDGEKDSDDEEE. Residues 310-329 are compositionally biased toward basic and acidic residues; the sequence is AERRKKAEAAKKKKAQEKAK. Positions 410-418 are interaction with PCNA; it reads QQGRLDGFF. Over residues 442–452 the composition is skewed to basic and acidic residues; the sequence is RKGEDKAEGSG.

Belongs to the XPG/RAD2 endonuclease family. FEN1 subfamily. Interacts with PCNA. Three molecules of FEN1 bind to one PCNA trimer with each molecule binding to one PCNA monomer. PCNA stimulates the nuclease activity without altering cleavage specificity. Mg(2+) serves as cofactor. In terms of processing, phosphorylated. Phosphorylation upon DNA damage induces relocalization to the nuclear plasma.

It is found in the nucleus. The protein resides in the nucleolus. The protein localises to the nucleoplasm. Its subcellular location is the mitochondrion. Structure-specific nuclease with 5'-flap endonuclease and 5'-3' exonuclease activities involved in DNA replication and repair. During DNA replication, cleaves the 5'-overhanging flap structure that is generated by displacement synthesis when DNA polymerase encounters the 5'-end of a downstream Okazaki fragment. It enters the flap from the 5'-end and then tracks to cleave the flap base, leaving a nick for ligation. Also involved in the long patch base excision repair (LP-BER) pathway, by cleaving within the apurinic/apyrimidinic (AP) site-terminated flap. Acts as a genome stabilization factor that prevents flaps from equilibrating into structures that lead to duplications and deletions. Also possesses 5'-3' exonuclease activity on nicked or gapped double-stranded DNA, and exhibits RNase H activity. Also involved in replication and repair of rDNA and in repairing mitochondrial DNA. In Coprinopsis cinerea (strain Okayama-7 / 130 / ATCC MYA-4618 / FGSC 9003) (Inky cap fungus), this protein is Flap endonuclease 1.